Here is a 740-residue protein sequence, read N- to C-terminus: Ion-translocating oxidoreductase complex subunit C (740 aa).

2 consecutive 4Fe-4S ferredoxin-type domains span residues 369–397 (GEPQ…QQLY) and 407–436 (KATT…VQYF). Residues Cys-377, Cys-380, Cys-383, Cys-387, Cys-416, Cys-419, Cys-422, and Cys-426 each contribute to the [4Fe-4S] cluster site. Positions 602 to 717 (KLEQQQANAE…PEEQVDPRKA (116 aa)) are disordered. 2 stretches are compositionally biased toward low complexity: residues 605-615 (QQQANAEPEQQ) and 637-647 (QQQANAEPEQQ).

The protein belongs to the 4Fe4S bacterial-type ferredoxin family. RnfC subfamily. In terms of assembly, the complex is composed of six subunits: RsxA, RsxB, RsxC, RsxD, RsxE and RsxG. Requires [4Fe-4S] cluster as cofactor.

The protein localises to the cell inner membrane. In terms of biological role, part of a membrane-bound complex that couples electron transfer with translocation of ions across the membrane. Required to maintain the reduced state of SoxR. This Escherichia coli (strain ATCC 8739 / DSM 1576 / NBRC 3972 / NCIMB 8545 / WDCM 00012 / Crooks) protein is Ion-translocating oxidoreductase complex subunit C.